We begin with the raw amino-acid sequence, 20 residues long: Calreticulin (20 aa).

It belongs to the calreticulin family. Glycosylated.

It is found in the endoplasmic reticulum lumen. Molecular calcium-binding chaperone promoting folding, oligomeric assembly and quality control in the ER via the calreticulin/calnexin cycle. This lectin may interact transiently with almost all of the monoglucosylated glycoproteins that are synthesized in the ER. The chain is Calreticulin from Spinacia oleracea (Spinach).